Reading from the N-terminus, the 364-residue chain is Aminomethyltransferase (364 aa).

Belongs to the GcvT family. As to quaternary structure, the glycine cleavage system is composed of four proteins: P, T, L and H.

It carries out the reaction N(6)-[(R)-S(8)-aminomethyldihydrolipoyl]-L-lysyl-[protein] + (6S)-5,6,7,8-tetrahydrofolate = N(6)-[(R)-dihydrolipoyl]-L-lysyl-[protein] + (6R)-5,10-methylene-5,6,7,8-tetrahydrofolate + NH4(+). Functionally, the glycine cleavage system catalyzes the degradation of glycine. The polypeptide is Aminomethyltransferase (Salmonella arizonae (strain ATCC BAA-731 / CDC346-86 / RSK2980)).